A 629-amino-acid chain; its full sequence is Polyadenylate-binding protein, cytoplasmic and nuclear (629 aa).

A disordered region spans residues 1–47 (MTLENKAEASPATKEETTTEAAPAEGEAKTESSEEKGSKEDQGDNAS). The segment covering 26-42 (GEAKTESSEEKGSKEDQ) has biased composition (basic and acidic residues). RRM domains lie at 46 to 124 (ASLY…WSQR), 134 to 211 (GNIY…PHVP), 227 to 304 (TNVF…RAKK), and 330 to 407 (VNLY…LAQR). The disordered stretch occupies residues 465–543 (GANPQMMMRP…RRKDGESRVA (79 aa)). 2 stretches are compositionally biased toward low complexity: residues 493-506 (MYGAPPQGYQQGGF) and 514-531 (GGQPPRSGQPGPQGQFRG). The PABC domain maps to 542–624 (VADSISNALE…AITAYNEYLN (83 aa)).

The protein belongs to the polyadenylate-binding protein type-1 family.

The protein localises to the cytoplasm. Its subcellular location is the nucleus. Binds the poly(A) tail of mRNA. Appears to be an important mediator of the multiple roles of the poly(A) tail in mRNA biogenesis, stability and translation. In the nucleus, involved in both mRNA cleavage and polyadenylation. Is also required for efficient mRNA export to the cytoplasm. Acts in concert with a poly(A)-specific nuclease (PAN) to affect poly(A) tail shortening, which may occur concomitantly with either nucleocytoplasmic mRNA transport or translational initiation. In the cytoplasm, stimulates translation initiation and regulates mRNA decay through translation termination-coupled poly(A) shortening, probably mediated by PAN. The protein is Polyadenylate-binding protein, cytoplasmic and nuclear (PAB1) of Yarrowia lipolytica (strain CLIB 122 / E 150) (Yeast).